A 525-amino-acid polypeptide reads, in one-letter code: PE-PGRS family protein PE_PGRS47 (525 aa).

The PE domain maps to 1–93; it reads MSFVIAAPEF…AYSYASAEAA (93 aa). Residues 506-525 are disordered; the sequence is VGGAGGLLEGQNGENGLLPS. The span at 514–525 shows a compositional bias: low complexity; it reads EGQNGENGLLPS.

Belongs to the mycobacterial PE family. PGRS subfamily.

The protein localises to the secreted. Its subcellular location is the cell surface. The protein resides in the host cytoplasm. It localises to the host cytosol. Functionally, contributes to evasion of both innate and adaptive immunity. Inhibits autophagy in infected host phagocytes and inhibits major histocompatibility complex (MHC) class II antigen presentation by mycobacteria-infected dendritic cells. Has an important role in the growth and survival of M.tuberculosis, particularly during intracellular growth and in the later chronic phase of infection. In Mycobacterium tuberculosis (strain ATCC 25618 / H37Rv), this protein is PE-PGRS family protein PE_PGRS47.